Here is a 512-residue protein sequence, read N- to C-terminus: NADH-quinone oxidoreductase subunit N 2 (512 aa).

Helical transmembrane passes span 23–43 (AFVP…IDLF), 50–70 (TIIP…VYLQ), 88–108 (FAIF…LISI), 120–140 (SLGE…LMAS), 144–164 (LLMM…LVGY), 179–199 (VIYG…IYGL), 220–240 (ITLM…AGVV), 254–274 (PTPI…AMLI), 295–315 (WVTL…VVAL), 323–343 (LLAY…IVAD), 351–371 (LFYL…IILI), 394–414 (AASL…VGFI), 429–449 (VFVW…YFYF), and 477–497 (LVAF…PLSV).

The protein belongs to the complex I subunit 2 family. In terms of assembly, NDH-1 is composed of 14 different subunits. Subunits NuoA, H, J, K, L, M, N constitute the membrane sector of the complex.

Its subcellular location is the cell inner membrane. It carries out the reaction a quinone + NADH + 5 H(+)(in) = a quinol + NAD(+) + 4 H(+)(out). In terms of biological role, NDH-1 shuttles electrons from NADH, via FMN and iron-sulfur (Fe-S) centers, to quinones in the respiratory chain. The immediate electron acceptor for the enzyme in this species is believed to be a menaquinone. Couples the redox reaction to proton translocation (for every two electrons transferred, four hydrogen ions are translocated across the cytoplasmic membrane), and thus conserves the redox energy in a proton gradient. The chain is NADH-quinone oxidoreductase subunit N 2 from Chloroherpeton thalassium (strain ATCC 35110 / GB-78).